The sequence spans 258 residues: Thiazole synthase (258 aa).

Lysine 97 (schiff-base intermediate with DXP) is an active-site residue. Residues glycine 158, 184–185, and 206–207 each bind 1-deoxy-D-xylulose 5-phosphate; these read AG and NT.

Belongs to the ThiG family. In terms of assembly, homotetramer. Forms heterodimers with either ThiH or ThiS.

The protein localises to the cytoplasm. It catalyses the reaction [ThiS sulfur-carrier protein]-C-terminal-Gly-aminoethanethioate + 2-iminoacetate + 1-deoxy-D-xylulose 5-phosphate = [ThiS sulfur-carrier protein]-C-terminal Gly-Gly + 2-[(2R,5Z)-2-carboxy-4-methylthiazol-5(2H)-ylidene]ethyl phosphate + 2 H2O + H(+). Its pathway is cofactor biosynthesis; thiamine diphosphate biosynthesis. Its function is as follows. Catalyzes the rearrangement of 1-deoxy-D-xylulose 5-phosphate (DXP) to produce the thiazole phosphate moiety of thiamine. Sulfur is provided by the thiocarboxylate moiety of the carrier protein ThiS. In vitro, sulfur can be provided by H(2)S. The polypeptide is Thiazole synthase (Bacteroides fragilis (strain ATCC 25285 / DSM 2151 / CCUG 4856 / JCM 11019 / LMG 10263 / NCTC 9343 / Onslow / VPI 2553 / EN-2)).